Consider the following 541-residue polypeptide: Putative acyl-CoA dehydrogenase AidB (541 aa).

FAD-binding positions include 182–191, Thr185, Ser191, 216–218, Ser218, 423–433, and Asn429; these read MGMTEKQGGS, FFS, and IWEGSGNIMCL. The segment at 445 to 541 is dsDNA-binding; the sequence is VYDLLSEAFV…LLRATGGVCV (97 aa).

Belongs to the acyl-CoA dehydrogenase family. Homotetramer. Dimer of dimers. The cofactor is FAD.

The protein localises to the cytoplasm. Its function is as follows. Part of the adaptive DNA-repair response to alkylating agents. Could prevent alkylation damage by protecting DNA and destroying alkylating agents that have yet to reach their DNA target. Binds to double-stranded DNA with a preference for a DNA region that includes its own promoter. Shows weak isovaleryl-CoA dehydrogenase activity in vitro. This Escherichia coli (strain K12) protein is Putative acyl-CoA dehydrogenase AidB (aidB).